Consider the following 491-residue polypeptide: Chromosomal replication initiator protein DnaA (491 aa).

The segment at 1–86 (MTDELNSQFT…VEALSRRLGE (86 aa)) is domain I, interacts with DnaA modulators. The tract at residues 86–150 (ENVELGVRIA…GADKAETPDT (65 aa)) is domain II. The domain III, AAA+ region stretch occupies residues 151-367 (SLNARYTFES…GALIRVTAFA (217 aa)). Positions 195, 197, 198, and 199 each coordinate ATP. A domain IV, binds dsDNA region spans residues 368–491 (SLNKSPIELS…TARIRQRSRH (124 aa)).

Belongs to the DnaA family. In terms of assembly, oligomerizes as a right-handed, spiral filament on DNA at oriC.

It localises to the cytoplasm. Functionally, plays an essential role in the initiation and regulation of chromosomal replication. ATP-DnaA binds to the origin of replication (oriC) to initiate formation of the DNA replication initiation complex once per cell cycle. Binds the DnaA box (a 9 base pair repeat at the origin) and separates the double-stranded (ds)DNA. Forms a right-handed helical filament on oriC DNA; dsDNA binds to the exterior of the filament while single-stranded (ss)DNA is stabiized in the filament's interior. The ATP-DnaA-oriC complex binds and stabilizes one strand of the AT-rich DNA unwinding element (DUE), permitting loading of DNA polymerase. After initiation quickly degrades to an ADP-DnaA complex that is not apt for DNA replication. Binds acidic phospholipids. This Mycobacteroides abscessus (strain ATCC 19977 / DSM 44196 / CCUG 20993 / CIP 104536 / JCM 13569 / NCTC 13031 / TMC 1543 / L948) (Mycobacterium abscessus) protein is Chromosomal replication initiator protein DnaA.